Reading from the N-terminus, the 584-residue chain is 2-succinyl-5-enolpyruvyl-6-hydroxy-3-cyclohexene-1-carboxylate synthase (584 aa).

Belongs to the TPP enzyme family. MenD subfamily. In terms of assembly, homodimer. The cofactor is Mg(2+). Requires Mn(2+) as cofactor. Thiamine diphosphate is required as a cofactor.

The enzyme catalyses isochorismate + 2-oxoglutarate + H(+) = 5-enolpyruvoyl-6-hydroxy-2-succinyl-cyclohex-3-ene-1-carboxylate + CO2. The protein operates within quinol/quinone metabolism; 1,4-dihydroxy-2-naphthoate biosynthesis; 1,4-dihydroxy-2-naphthoate from chorismate: step 2/7. It participates in quinol/quinone metabolism; menaquinone biosynthesis. Its function is as follows. Catalyzes the thiamine diphosphate-dependent decarboxylation of 2-oxoglutarate and the subsequent addition of the resulting succinic semialdehyde-thiamine pyrophosphate anion to isochorismate to yield 2-succinyl-5-enolpyruvyl-6-hydroxy-3-cyclohexene-1-carboxylate (SEPHCHC). This is 2-succinyl-5-enolpyruvyl-6-hydroxy-3-cyclohexene-1-carboxylate synthase from Bacillus thuringiensis subsp. konkukian (strain 97-27).